A 364-amino-acid polypeptide reads, in one-letter code: Aminomethyltransferase (364 aa).

It belongs to the GcvT family. As to quaternary structure, the glycine cleavage system is composed of four proteins: P, T, L and H.

It catalyses the reaction N(6)-[(R)-S(8)-aminomethyldihydrolipoyl]-L-lysyl-[protein] + (6S)-5,6,7,8-tetrahydrofolate = N(6)-[(R)-dihydrolipoyl]-L-lysyl-[protein] + (6R)-5,10-methylene-5,6,7,8-tetrahydrofolate + NH4(+). In terms of biological role, the glycine cleavage system catalyzes the degradation of glycine. The protein is Aminomethyltransferase of Escherichia coli (strain 55989 / EAEC).